Reading from the N-terminus, the 318-residue chain is Large ribosomal subunit protein uL10 (318 aa).

Residue tyrosine 24 is modified to Phosphotyrosine. Position 59 is a phosphothreonine (threonine 59). A Glycyl lysine isopeptide (Lys-Gly) (interchain with G-Cter in ubiquitin) cross-link involves residue lysine 264. Residue lysine 298 forms a Glycyl lysine isopeptide (Lys-Gly) (interchain with G-Cter in SUMO1); alternate linkage. A Glycyl lysine isopeptide (Lys-Gly) (interchain with G-Cter in SUMO2); alternate cross-link involves residue lysine 298. Residues 298–318 (KVEAKEESEESDEDMGFGLFD) are disordered. Over residues 303 to 312 (EESEESDEDM) the composition is skewed to acidic residues. Residues serine 305 and serine 308 each carry the phosphoserine modification.

Belongs to the universal ribosomal protein uL10 family. P0 forms a pentameric complex by interaction with dimers of P1 and P2. Identified in a IGF2BP1-dependent mRNP granule complex containing untranslated mRNAs. Interacts with APEX1. Interacts with FMR1. Ubiquitinated at Lys-264 by RNF14 and RNF25 in response to ribosome collisions (ribosome stalling).

The protein resides in the nucleus. The protein localises to the cytoplasm. Its function is as follows. Ribosomal protein P0 is the functional equivalent of E.coli protein L10. The polypeptide is Large ribosomal subunit protein uL10 (RPLP0) (Sus scrofa (Pig)).